A 178-amino-acid polypeptide reads, in one-letter code: Interleukin-1 receptor antagonist protein (178 aa).

The N-terminal stretch at 1–26 (MEICWGPYSHLISLLLILLFHSEAAC) is a signal peptide. The cysteines at positions 92 and 142 are disulfide-linked. Residue asparagine 110 is glycosylated (N-linked (GlcNAc...) asparagine).

This sequence belongs to the IL-1 family.

It localises to the secreted. The protein resides in the cytoplasm. Its function is as follows. Anti-inflammatory antagonist of interleukin-1 family of proinflammatory cytokines such as interleukin-1beta/IL1B and interleukin-1alpha/IL1A. Protects from immune dysregulation and uncontrolled systemic inflammation triggered by IL1 for a range of innate stimulatory agents such as pathogens. The protein is Interleukin-1 receptor antagonist protein (Il1rn) of Mus musculus (Mouse).